Reading from the N-terminus, the 320-residue chain is Aspartate carbamoyltransferase catalytic subunit (320 aa).

The carbamoyl phosphate site is built by arginine 68 and threonine 69. Lysine 96 lines the L-aspartate pocket. Carbamoyl phosphate is bound by residues arginine 118, histidine 148, and glutamine 151. The L-aspartate site is built by arginine 181 and arginine 236. Residues glycine 277 and proline 278 each contribute to the carbamoyl phosphate site.

The protein belongs to the aspartate/ornithine carbamoyltransferase superfamily. ATCase family. As to quaternary structure, heterododecamer (2C3:3R2) of six catalytic PyrB chains organized as two trimers (C3), and six regulatory PyrI chains organized as three dimers (R2).

It catalyses the reaction carbamoyl phosphate + L-aspartate = N-carbamoyl-L-aspartate + phosphate + H(+). Its pathway is pyrimidine metabolism; UMP biosynthesis via de novo pathway; (S)-dihydroorotate from bicarbonate: step 2/3. Catalyzes the condensation of carbamoyl phosphate and aspartate to form carbamoyl aspartate and inorganic phosphate, the committed step in the de novo pyrimidine nucleotide biosynthesis pathway. The protein is Aspartate carbamoyltransferase catalytic subunit of Leptothrix cholodnii (strain ATCC 51168 / LMG 8142 / SP-6) (Leptothrix discophora (strain SP-6)).